A 428-amino-acid polypeptide reads, in one-letter code: Enolase (428 aa).

Gln165 is a binding site for (2R)-2-phosphoglycerate. The active-site Proton donor is Glu207. Mg(2+) is bound by residues Asp244, Glu285, and Asp312. Residues Lys337, Arg366, Ser367, and Lys388 each contribute to the (2R)-2-phosphoglycerate site. The Proton acceptor role is filled by Lys337.

It belongs to the enolase family. Component of the RNA degradosome, a multiprotein complex involved in RNA processing and mRNA degradation. It depends on Mg(2+) as a cofactor.

The protein localises to the cytoplasm. Its subcellular location is the secreted. The protein resides in the cell surface. The enzyme catalyses (2R)-2-phosphoglycerate = phosphoenolpyruvate + H2O. It participates in carbohydrate degradation; glycolysis; pyruvate from D-glyceraldehyde 3-phosphate: step 4/5. Its function is as follows. Catalyzes the reversible conversion of 2-phosphoglycerate (2-PG) into phosphoenolpyruvate (PEP). It is essential for the degradation of carbohydrates via glycolysis. The polypeptide is Enolase (Coxiella burnetii (strain CbuK_Q154) (Coxiella burnetii (strain Q154))).